Reading from the N-terminus, the 134-residue chain is UPF0216 protein AF_0460 (134 aa).

This sequence belongs to the UPF0216 family.

The sequence is that of UPF0216 protein AF_0460 from Archaeoglobus fulgidus (strain ATCC 49558 / DSM 4304 / JCM 9628 / NBRC 100126 / VC-16).